We begin with the raw amino-acid sequence, 566 residues long: Oxygen-dependent choline dehydrogenase (566 aa).

7–36 contributes to the FAD binding site; sequence DYIICGAGSAGNVLATRLTEDPNVTVLLLE. The segment at 180–203 is disordered; the sequence is NGYQQEGFGPMDRTVTPKGRRAST. His-474 (proton acceptor) is an active-site residue.

The protein belongs to the GMC oxidoreductase family. Requires FAD as cofactor.

The catalysed reaction is choline + A = betaine aldehyde + AH2. The enzyme catalyses betaine aldehyde + NAD(+) + H2O = glycine betaine + NADH + 2 H(+). The protein operates within amine and polyamine biosynthesis; betaine biosynthesis via choline pathway; betaine aldehyde from choline (cytochrome c reductase route): step 1/1. Involved in the biosynthesis of the osmoprotectant glycine betaine. Catalyzes the oxidation of choline to betaine aldehyde and betaine aldehyde to glycine betaine at the same rate. This Burkholderia ambifaria (strain MC40-6) protein is Oxygen-dependent choline dehydrogenase.